A 552-amino-acid polypeptide reads, in one-letter code: Chaperonin GroEL 1 (552 aa).

ATP contacts are provided by residues 30-33 (TLGP), lysine 51, 87-91 (DGTTT), glycine 415, 479-481 (NAA), and aspartate 495.

It belongs to the chaperonin (HSP60) family. As to quaternary structure, forms a cylinder of 14 subunits composed of two heptameric rings stacked back-to-back. Interacts with the co-chaperonin GroES.

Its subcellular location is the cytoplasm. It carries out the reaction ATP + H2O + a folded polypeptide = ADP + phosphate + an unfolded polypeptide.. Its function is as follows. Together with its co-chaperonin GroES, plays an essential role in assisting protein folding. The GroEL-GroES system forms a nano-cage that allows encapsulation of the non-native substrate proteins and provides a physical environment optimized to promote and accelerate protein folding. This Albidiferax ferrireducens (strain ATCC BAA-621 / DSM 15236 / T118) (Rhodoferax ferrireducens) protein is Chaperonin GroEL 1.